The primary structure comprises 317 residues: Putative methyltransferase YMR310C (317 aa).

Ser190 bears the Phosphoserine mark.

Belongs to the class IV-like SAM-binding methyltransferase superfamily.

It is found in the nucleus. This Saccharomyces cerevisiae (strain ATCC 204508 / S288c) (Baker's yeast) protein is Putative methyltransferase YMR310C.